Here is a 496-residue protein sequence, read N- to C-terminus: Probable CtpA-like serine protease (496 aa).

The span at 1-16 (MDDKQHTSSSDDERAE) shows a compositional bias: basic and acidic residues. A disordered region spans residues 1 to 27 (MDDKQHTSSSDDERAEIATSNQDQETN). Positions 18–27 (ATSNQDQETN) are enriched in polar residues. Residues 39-59 (FISILIGTILITAVITVVAYI) traverse the membrane as a helical segment. The PDZ domain occupies 124–206 (TKSFNEGVSG…TEVTLTVQRG (83 aa)). Active-site charge relay system residues include Ser329, Asp340, and Lys354.

The protein belongs to the peptidase S41A family.

The protein resides in the cell membrane. This is Probable CtpA-like serine protease from Staphylococcus aureus (strain MSSA476).